Here is a 398-residue protein sequence, read N- to C-terminus: Ubiquitin carboxyl-terminal hydrolase 17-like protein 6 (398 aa).

Positions 80–375 (AGLQNMGNTC…QAYVLFYIQK (296 aa)) constitute a USP domain. The active-site Nucleophile is C89. H334 functions as the Proton acceptor in the catalytic mechanism.

The protein belongs to the peptidase C19 family. USP17 subfamily.

The protein resides in the nucleus. It localises to the cytoplasm. The catalysed reaction is Thiol-dependent hydrolysis of ester, thioester, amide, peptide and isopeptide bonds formed by the C-terminal Gly of ubiquitin (a 76-residue protein attached to proteins as an intracellular targeting signal).. Functionally, deubiquitinating enzyme that removes conjugated ubiquitin from specific proteins to regulate different cellular processes that may include cell proliferation, progression through the cell cycle, cell migration, and the cellular response to viral infection. Seems to be non-functional in the regulation of apoptosis. In Homo sapiens (Human), this protein is Ubiquitin carboxyl-terminal hydrolase 17-like protein 6 (USP17L6P).